A 304-amino-acid polypeptide reads, in one-letter code: tRNA-uridine aminocarboxypropyltransferase 1 (304 aa).

Position 2 is an N-acetylserine (Ser-2). Positions 206-209 match the DXTW motif; the sequence is DSTW.

It belongs to the TDD superfamily. DTWD1 family.

It is found in the nucleus. The catalysed reaction is a uridine in tRNA + S-adenosyl-L-methionine = a 3-[(3S)-3-amino-3-carboxypropyl]uridine in tRNA + S-methyl-5'-thioadenosine + H(+). Its function is as follows. Catalyzes the formation of 3-(3-amino-3-carboxypropyl)uridine (acp3U) at position 20 in the D-loop of several cytoplasmic tRNAs (acp3U(20)). This chain is tRNA-uridine aminocarboxypropyltransferase 1, found in Pongo abelii (Sumatran orangutan).